Here is a 107-residue protein sequence, read N- to C-terminus: Proteinase inhibitor I-B (107 aa).

The N-terminal stretch at 1–22 (MVKFAHVVAFLLLASLFQPLTA) is a signal peptide. Positions 23-39 (RDLEINVLQLDVSQSGC) are excised as a propeptide.

This sequence belongs to the protease inhibitor I13 (potato type I serine protease inhibitor) family.

The protein localises to the secreted. The protein is Proteinase inhibitor I-B (TIMPA) of Nicotiana tabacum (Common tobacco).